The primary structure comprises 72 residues: Translation initiation factor IF-1 (72 aa).

The S1-like domain maps to 1–72 (MPKEEVLEFP…TKGRITYRFK (72 aa)).

This sequence belongs to the IF-1 family. As to quaternary structure, component of the 30S ribosomal translation pre-initiation complex which assembles on the 30S ribosome in the order IF-2 and IF-3, IF-1 and N-formylmethionyl-tRNA(fMet); mRNA recruitment can occur at any time during PIC assembly.

Its subcellular location is the cytoplasm. In terms of biological role, one of the essential components for the initiation of protein synthesis. Stabilizes the binding of IF-2 and IF-3 on the 30S subunit to which N-formylmethionyl-tRNA(fMet) subsequently binds. Helps modulate mRNA selection, yielding the 30S pre-initiation complex (PIC). Upon addition of the 50S ribosomal subunit IF-1, IF-2 and IF-3 are released leaving the mature 70S translation initiation complex. In Chelativorans sp. (strain BNC1), this protein is Translation initiation factor IF-1.